The sequence spans 366 residues: MMTKNSIEFDPYIERKAFDETKQGVKGLVDAKITEVPRIFHHRQDILTNKKPSASVSDLEIPIIDFASVHADTASREAIVEKVKYAVENWGFFQVINHSIPLNVLEEIKDGVRRFHEEDPEVKKSFFSRDAGNKKFVYNSNFDLYSSSPSVNWRDSFSCYIAPDPPAPEEIPETCRDAMFEYSKHVLSFGGLLFELLSEALGLKSQTLESMDCVKTLLMICHYYPPCPQPDLTLGITKHSDNSFLTLLLQDNIGGLQILHQDSWVDVSPIHGALVVNIGDFLQLITNDKFVSVEHRVLANRQGPRISVASFFSSSMRPNSRVYGPMKELVSEENPPKYRDITIKEYSKIFFEKGLDGTSHLSNIRI.

One can recognise a Fe2OG dioxygenase domain in the interval Lys-215–Ser-314. Fe cation contacts are provided by His-239, Asp-241, and His-295. Arg-305 is a binding site for 2-oxoglutarate.

This sequence belongs to the iron/ascorbate-dependent oxidoreductase family. Requires Fe(2+) as cofactor.

In Arabidopsis thaliana (Mouse-ear cress), this protein is 1-aminocyclopropane-1-carboxylate oxidase homolog 12.